A 476-amino-acid chain; its full sequence is Bifunctional protein HldE (476 aa).

Residues 1-318 (MAQYSAEFKQ…ENAIHARPET (318 aa)) form a ribokinase region. 195–198 (NMSE) lines the ATP pocket. D264 is a catalytic residue. The segment at 344–476 (MTNGCFDILH…VIEKIKLLKD (133 aa)) is cytidylyltransferase.

The protein in the N-terminal section; belongs to the carbohydrate kinase PfkB family. This sequence in the C-terminal section; belongs to the cytidylyltransferase family. Homodimer.

The catalysed reaction is D-glycero-beta-D-manno-heptose 7-phosphate + ATP = D-glycero-beta-D-manno-heptose 1,7-bisphosphate + ADP + H(+). It catalyses the reaction D-glycero-beta-D-manno-heptose 1-phosphate + ATP + H(+) = ADP-D-glycero-beta-D-manno-heptose + diphosphate. Its pathway is nucleotide-sugar biosynthesis; ADP-L-glycero-beta-D-manno-heptose biosynthesis; ADP-L-glycero-beta-D-manno-heptose from D-glycero-beta-D-manno-heptose 7-phosphate: step 1/4. It functions in the pathway nucleotide-sugar biosynthesis; ADP-L-glycero-beta-D-manno-heptose biosynthesis; ADP-L-glycero-beta-D-manno-heptose from D-glycero-beta-D-manno-heptose 7-phosphate: step 3/4. Functionally, catalyzes the phosphorylation of D-glycero-D-manno-heptose 7-phosphate at the C-1 position to selectively form D-glycero-beta-D-manno-heptose-1,7-bisphosphate. Catalyzes the ADP transfer from ATP to D-glycero-beta-D-manno-heptose 1-phosphate, yielding ADP-D-glycero-beta-D-manno-heptose. This Haemophilus influenzae (strain 86-028NP) protein is Bifunctional protein HldE.